Here is a 157-residue protein sequence, read N- to C-terminus: 2-C-methyl-D-erythritol 2,4-cyclodiphosphate synthase (157 aa).

Positions 8 and 10 each coordinate a divalent metal cation. Residues 8 to 10 (DVH) and 34 to 35 (HS) contribute to the 4-CDP-2-C-methyl-D-erythritol 2-phosphate site. His-42 contacts a divalent metal cation. Residues 56–58 (DIG), 132–135 (TTNE), and Arg-142 each bind 4-CDP-2-C-methyl-D-erythritol 2-phosphate.

The protein belongs to the IspF family. As to quaternary structure, homotrimer. The cofactor is a divalent metal cation.

The enzyme catalyses 4-CDP-2-C-methyl-D-erythritol 2-phosphate = 2-C-methyl-D-erythritol 2,4-cyclic diphosphate + CMP. The protein operates within isoprenoid biosynthesis; isopentenyl diphosphate biosynthesis via DXP pathway; isopentenyl diphosphate from 1-deoxy-D-xylulose 5-phosphate: step 4/6. In terms of biological role, involved in the biosynthesis of isopentenyl diphosphate (IPP) and dimethylallyl diphosphate (DMAPP), two major building blocks of isoprenoid compounds. Catalyzes the conversion of 4-diphosphocytidyl-2-C-methyl-D-erythritol 2-phosphate (CDP-ME2P) to 2-C-methyl-D-erythritol 2,4-cyclodiphosphate (ME-CPP) with a corresponding release of cytidine 5-monophosphate (CMP). The protein is 2-C-methyl-D-erythritol 2,4-cyclodiphosphate synthase of Chlorobaculum parvum (strain DSM 263 / NCIMB 8327) (Chlorobium vibrioforme subsp. thiosulfatophilum).